Here is a 307-residue protein sequence, read N- to C-terminus: MLNNLEQLTTEKVNLETLNIDEKSPLEIVKVINEEDKKVALAVEKELPNIAKAVEKIIEAFKTNGRLIYLGAGTSGRLGILDAAECPPTFGTSKEQVIGLIAGGREALLEAVEGAEDSKEEGIKDLKNIKLTSQDIVVGIAASGRTPYVVGGLNYANNIGATTVALCCNKDAVITRVADIAIVPVVGPEVIAGSTRLKSGTAQKLVLNMLTTASMIGVGKVYKNLMVDVQTTNEKLEDRSKRIVMMATGVGEIEATEILKNSNYQPKVAILMINTGCSFVEATAKLQEAGGFVKKALEYIKEGEEIC.

The 164-residue stretch at 57–220 (IIEAFKTNGR…TTASMIGVGK (164 aa)) folds into the SIS domain. Glu85 acts as the Proton donor in catalysis. Residue Glu116 is part of the active site.

Belongs to the GCKR-like family. MurNAc-6-P etherase subfamily. Homodimer.

The enzyme catalyses N-acetyl-D-muramate 6-phosphate + H2O = N-acetyl-D-glucosamine 6-phosphate + (R)-lactate. It functions in the pathway amino-sugar metabolism; N-acetylmuramate degradation. Specifically catalyzes the cleavage of the D-lactyl ether substituent of MurNAc 6-phosphate, producing GlcNAc 6-phosphate and D-lactate. This Alkaliphilus metalliredigens (strain QYMF) protein is N-acetylmuramic acid 6-phosphate etherase.